A 534-amino-acid polypeptide reads, in one-letter code: Prolyl 4-hydroxylase subunit alpha-1 (534 aa).

A signal peptide spans 1 to 17 (MIWYILIIGILLPQSLA). An N-linked (GlcNAc...) asparagine glycan is attached at asparagine 113. A TPR repeat occupies 205–238 (VSVLDYLSYAVYQQGDLDKALLLTKKLLELDPEH). A glycan (N-linked (GlcNAc...) asparagine) is linked at asparagine 259. Residues 411–519 (TAEELQVANY…KWVSNKWLHE (109 aa)) form the Fe2OG dioxygenase domain. The Fe cation site is built by histidine 429, aspartate 431, and histidine 500. Lysine 510 contacts 2-oxoglutarate.

The protein belongs to the P4HA family. Heterotetramer of two alpha-1 chains and two beta chains (P4HB)(the beta chain is the multi-functional PDI), where P4HB plays the role of a structural subunit; this tetramer catalyzes the formation of 4-hydroxyproline in collagen. Fe(2+) serves as cofactor. The cofactor is L-ascorbate. Expressed in the heart, liver, skeletal muscle, kidney, placenta, lung and pancreas.

The protein resides in the endoplasmic reticulum lumen. It catalyses the reaction L-prolyl-[collagen] + 2-oxoglutarate + O2 = trans-4-hydroxy-L-prolyl-[collagen] + succinate + CO2. Its activity is regulated as follows. Inhibited by poly(L-proline). Its function is as follows. Catalyzes the post-translational formation of 4-hydroxyproline in -Xaa-Pro-Gly- sequences in collagens and other proteins. The protein is Prolyl 4-hydroxylase subunit alpha-1 (P4HA1) of Homo sapiens (Human).